A 198-amino-acid polypeptide reads, in one-letter code: Dual specificity protein phosphatase 14 (198 aa).

One can recognise a Tyrosine-protein phosphatase domain in the interval 26-167; that stretch reads GIAQITSSLF…LIDYESQLFG (142 aa). The Phosphocysteine intermediate role is filled by C111.

Belongs to the protein-tyrosine phosphatase family. Non-receptor class dual specificity subfamily.

It carries out the reaction O-phospho-L-tyrosyl-[protein] + H2O = L-tyrosyl-[protein] + phosphate. It catalyses the reaction O-phospho-L-seryl-[protein] + H2O = L-seryl-[protein] + phosphate. The enzyme catalyses O-phospho-L-threonyl-[protein] + H2O = L-threonyl-[protein] + phosphate. Involved in the inactivation of MAP kinases. Dephosphorylates ERK, JNK and p38 MAP-kinases. Plays a negative role in TCR signaling by dephosphorylating MAP3K7 adapter TAB1 leading to its inactivation. This chain is Dual specificity protein phosphatase 14 (Dusp14), found in Mus musculus (Mouse).